Consider the following 231-residue polypeptide: Protoporphyrinogen IX dehydrogenase [quinone] (231 aa).

Residues 8 to 178 (CLMLYSTTDG…AVRRFASDFA (171 aa)) enclose the Flavodoxin-like domain. Residues 14 to 18 (TTDGH) and 90 to 158 (FFSV…ETDS) each bind FMN. The chain crosses the membrane as a helical span at residues 208 to 228 (CLLAIVGMSAAVIVGIRIIAA).

Belongs to the HemG family. It depends on FMN as a cofactor.

The protein resides in the membrane. It carries out the reaction protoporphyrinogen IX + 3 a menaquinone = protoporphyrin IX + 3 a menaquinol. The catalysed reaction is protoporphyrinogen IX + 3 a ubiquinone = protoporphyrin IX + 3 a ubiquinol. The enzyme catalyses protoporphyrinogen IX + 3 a quinone = protoporphyrin IX + 3 a quinol. It participates in porphyrin-containing compound metabolism; protoporphyrin-IX biosynthesis; protoporphyrin-IX from protoporphyrinogen-IX: step 1/1. In terms of biological role, in E.coli extracts under anerobic conditions catalyzes the 6-electron oxidation of protoporphyrinogen IX to form protoporphyrin IX, transferring electrons to fumarate reductase, presumably via menaquinone. In vitro under aerobic conditions forms protoporphyrin IX using ubiquinone as an electron acceptor. Complements an E.coli hemG deletion, allowing normal growth in vivo. The polypeptide is Protoporphyrinogen IX dehydrogenase [quinone] (Leishmania major).